The chain runs to 335 residues: MAIISSVNRTCASESLLELYRSYKYILSTSFNIIIPIISLFFLVYAIKQLCAQSIIQYSTRVLLITTILFAVCHQIAYFCFKADLLYTMLFKLDQPCNLQHSSYDCRFITIATTTSNCGMALVQLAMSIDRVFALKFNRVYYKLKSIPGITLALITLSISFSMFFILTIDDPLSGYVNHCGFYPTYSQDKFHIFLDVTLYLAVFNFVFDIGLMYYSYQEILWKRSYSFVNRFQSRISLKCTQAIFIISICQCISNVLYSGLLSLLMKLGRYMSSADYNLSLSLAYTTPYSCLILPILICKVLEYIKKQRTVGILSLRNQKQSMEGHMAMINSAWK.

The Extracellular portion of the chain corresponds to 1–25 (MAIISSVNRTCASESLLELYRSYKY). A helical membrane pass occupies residues 26–46 (ILSTSFNIIIPIISLFFLVYA). At 47–61 (IKQLCAQSIIQYSTR) the chain is on the cytoplasmic side. Residues 62–82 (VLLITTILFAVCHQIAYFCFK) traverse the membrane as a helical segment. Over 83-108 (ADLLYTMLFKLDQPCNLQHSSYDCRF) the chain is Extracellular. Residues 109–129 (ITIATTTSNCGMALVQLAMSI) form a helical membrane-spanning segment. The Cytoplasmic segment spans residues 130–146 (DRVFALKFNRVYYKLKS). Residues 147 to 167 (IPGITLALITLSISFSMFFIL) traverse the membrane as a helical segment. Residues 168–192 (TIDDPLSGYVNHCGFYPTYSQDKFH) are Extracellular-facing. A helical membrane pass occupies residues 193 to 213 (IFLDVTLYLAVFNFVFDIGLM). Over 214–243 (YYSYQEILWKRSYSFVNRFQSRISLKCTQA) the chain is Cytoplasmic. The helical transmembrane segment at 244–264 (IFIISICQCISNVLYSGLLSL) threads the bilayer. At 265–278 (LMKLGRYMSSADYN) the chain is on the extracellular side. A helical transmembrane segment spans residues 279–299 (LSLSLAYTTPYSCLILPILIC). Residues 300–335 (KVLEYIKKQRTVGILSLRNQKQSMEGHMAMINSAWK) are Cytoplasmic-facing.

Belongs to the nematode receptor-like protein sra family. Expressed in the AWA and AWC chemosensory neurons.

Its subcellular location is the membrane. Chemosensory receptor that negatively regulates RAS/MAPK signaling during vulva induction and the negative regulation of olfaction of volitile attractants. Required for the suppression of vulval induction in response to food starvation. Signaling acts through the GPA-5 G-alpha protein subunit. The polypeptide is Serpentine receptor class alpha-13 (sra-13) (Caenorhabditis elegans).